Consider the following 292-residue polypeptide: MNPFWSMSTSSVRKRSEGEEKTLTGDVKTSPPRTAPKKQLPSIPKNALPITKPTSPAPAAQSTNGTHASYGPFYLEYSLLAEFTLVVKQKLPGVYVQPSYRSALMWFGVIFIRHGLYQDGVFKFTVYIPDNYPDGDCPRLVFDIPVFHPLVDPTSGELDVKRAFAKWRRNHNHIWQVLMYARRVFYKIDTASPLNPEAAVLYEKDIQLFKSKVVDSVKVCTARLFDQPKIEDPYAISFSPWNPSVHDEAREKMLTQKKPEEQHNKSVHVAGLSWVKPGSVQPFSKEEKTVAT.

Polar residues predominate over residues 1 to 11 (MNPFWSMSTSS). The tract at residues 1–63 (MNPFWSMSTS…TSPAPAAQST (63 aa)) is disordered. Basic and acidic residues predominate over residues 14-23 (KRSEGEEKTL). S30 is modified (phosphoserine). One can recognise a UBC core domain in the interval 74–222 (YLEYSLLAEF…VVDSVKVCTA (149 aa)).

It belongs to the ubiquitin-conjugating enzyme family. FTS subfamily. In terms of assembly, component of the FTS/Hook/FHIP complex (FHF complex), composed of AKTIP/FTS, FHIP1B, and one or more members of the Hook family of proteins HOOK1, HOOK2, and HOOK3. Interacts directly with HOOK1, HOOK2 and HOOK3. The FHF complex associates with the homotypic vesicular sorting complex (the HOPS complex). Also interacts with AKT1. May interact with FHIP1A.

It is found in the cytoplasm. The protein resides in the cell membrane. Its function is as follows. Component of the FTS/Hook/FHIP complex (FHF complex). The FHF complex may function to promote vesicle trafficking and/or fusion via the homotypic vesicular protein sorting complex (the HOPS complex). Regulates apoptosis by enhancing phosphorylation and activation of AKT1. Increases release of TNFSF6 via the AKT1/GSK3B/NFATC1 signaling cascade. FHF complex promotes the distribution of AP-4 complex to the perinuclear area of the cell. The protein is AKT-interacting protein of Homo sapiens (Human).